Reading from the N-terminus, the 194-residue chain is Naphthalene 1,2-dioxygenase system, small oxygenase component (194 aa).

Belongs to the bacterial ring-hydroxylating dioxygenase beta subunit family. In terms of assembly, the naphthalene dioxygenase (NDO) multicomponent enzyme system is composed of an electron transfer component and a dioxygenase component (iron sulfur protein (ISP)). The electron transfer component is composed of a ferredoxin reductase (NagAa) and a ferredoxin (NagAb), and the dioxygenase component is formed by a large alpha subunit (NagAc) and a small beta subunit (NagAd).

It functions in the pathway aromatic compound metabolism; naphthalene degradation. Its function is as follows. Component of the naphthalene dioxygenase (NDO) multicomponent enzyme system which catalyzes the incorporation of both atoms of molecular oxygen into naphthalene to form cis-(1R,2S)-dihydroxy-1,2-dihydronaphthalene. Also able to use styrene as substrate. The beta subunit seems to have a structural role in the holoenzyme. In Ralstonia sp, this protein is Naphthalene 1,2-dioxygenase system, small oxygenase component.